The following is an 862-amino-acid chain: Autotaxin (862 aa).

The N-terminal stretch at 1–27 (MARQGCFGSYQVISLFTFAIGVNLCLG) is a signal peptide. Residues 28–35 (FTASRIKR) constitute a propeptide, removed by furin. Residue asparagine 53 is glycosylated (N-linked (GlcNAc...) asparagine). SMB domains follow at residues 54-97 (TSGS…LKTA) and 98-142 (RGWE…GESH). 10 disulfide bridges follow: cysteine 58-cysteine 75, cysteine 62-cysteine 93, cysteine 73-cysteine 86, cysteine 79-cysteine 85, cysteine 102-cysteine 119, cysteine 107-cysteine 137, cysteine 117-cysteine 130, cysteine 123-cysteine 129, cysteine 148-cysteine 194, and cysteine 156-cysteine 350. A Cell attachment site motif is present at residues 126-128 (RGD). The segment at 144-501 (VDDDCEEIRV…PTFKYRTKVP (358 aa)) is phosphodiesterase domain. Zn(2+)-binding residues include aspartate 171 and threonine 209. The active-site Nucleophile is threonine 209. 1-(9Z-octadecenoyl)-sn-glycero-3-phosphate is bound by residues threonine 209, asparagine 230, and aspartate 311. 1-hexadecanoyl-sn-glycero-3-phosphate contacts are provided by threonine 209, asparagine 230, and aspartate 311. Residues threonine 209, asparagine 230, and aspartate 311 each contribute to the 1-tetradecanoyl-sn-glycerol 3-phosphate site. Aspartate 311, histidine 315, aspartate 358, and histidine 359 together coordinate Zn(2+). 5 cysteine pairs are disulfide-bonded: cysteine 366–cysteine 468, cysteine 413–cysteine 805, cysteine 566–cysteine 666, cysteine 568–cysteine 651, and cysteine 774–cysteine 784. Asparagine 410 is a glycosylation site (N-linked (GlcNAc...) asparagine). Residue histidine 474 coordinates Zn(2+). Residue histidine 474 participates in 1-(9Z-octadecenoyl)-sn-glycero-3-phosphate binding. Histidine 474 is a binding site for 1-hexadecanoyl-sn-glycero-3-phosphate. Histidine 474 is a 1-tetradecanoyl-sn-glycerol 3-phosphate binding site. N-linked (GlcNAc...) asparagine glycosylation occurs at asparagine 524. The interval 597–862 (LYGRPAVLYR…TYLHTYESEI (266 aa)) is nuclease-like domain. 5 residues coordinate Ca(2+): aspartate 739, asparagine 741, asparagine 743, leucine 745, and aspartate 747. A glycan (N-linked (GlcNAc...) asparagine) is linked at asparagine 806. The required for secretion stretch occupies residues 829–850 (IEHLTGLDFYRKTSRSYSEILT).

This sequence belongs to the nucleotide pyrophosphatase/phosphodiesterase family. Requires Zn(2+) as cofactor. Ca(2+) is required as a cofactor. Post-translationally, N-glycosylation, but not furin-cleavage, plays a critical role on secretion and on lysoPLD activity. Secretion requires simultaneous glycosylation on Asn-53 and Asn-410, while probable glycosylation of Asn-410 has a preferential role on lysoPLD activity. Not O-glycosylated. In terms of processing, the interdomain disulfide bond between Cys-413 and Cys-805 is essential for catalytic activity. As to expression, expressed in brain and adipose tissue.

It is found in the secreted. The catalysed reaction is a 1-O-alkyl-sn-glycero-3-phosphoethanolamine + H2O = a 1-O-alkyl-sn-glycero-3-phosphate + ethanolamine + H(+). The enzyme catalyses a 1-acyl-sn-glycero-3-phosphoethanolamine + H2O = a 1-acyl-sn-glycero-3-phosphate + ethanolamine + H(+). It carries out the reaction 1-(9Z-octadecenoyl)-sn-glycero-3-phosphoethanolamine + H2O = 1-(9Z-octadecenoyl)-sn-glycero-3-phosphate + ethanolamine + H(+). It catalyses the reaction a 1-O-alkyl-sn-glycero-3-phosphocholine + H2O = a 1-O-alkyl-sn-glycero-3-phosphate + choline + H(+). The catalysed reaction is 1-O-(9Z-octadecenyl)-sn-glycero-3-phosphocholine + H2O = 1-O-(9Z-octadecenyl)-sn-glycero-3-phosphate + choline + H(+). The enzyme catalyses 1-O-hexadecyl-sn-glycero-3-phosphocholine + H2O = 1-O-hexadecyl-sn-glycero-3-phosphate + choline + H(+). It carries out the reaction a 1-O-(1Z-alkenyl)-sn-glycero-3-phosphocholine + H2O = a 1-O-(1Z-alkenyl)-sn-glycero-3-phosphate + choline + H(+). It catalyses the reaction a 1-acyl-sn-glycero-3-phosphocholine + H2O = a 1-acyl-sn-glycero-3-phosphate + choline + H(+). The catalysed reaction is 1-dodecanoyl-sn-glycero-3-phosphocholine + H2O = 1-dodecanoyl-sn-glycerol 3-phosphate + choline + H(+). The enzyme catalyses 1-(9Z-octadecenoyl)-sn-glycero-3-phosphocholine + H2O = 1-(9Z-octadecenoyl)-sn-glycero-3-phosphate + choline + H(+). It carries out the reaction 1-tetradecanoyl-sn-glycero-3-phosphocholine + H2O = 1-tetradecanoyl-sn-glycerol 3-phosphate + choline + H(+). It catalyses the reaction 1-decanoyl-sn-glycero-3-phosphocholine + H2O = 1-decanoyl-sn-glycero-3-phosphate + choline + H(+). The catalysed reaction is 1-octadecanoyl-sn-glycero-3-phosphocholine + H2O = 1-octadecanoyl-sn-glycero-3-phosphate + choline + H(+). The enzyme catalyses 1-hexadecanoyl-sn-glycero-3-phosphocholine + H2O = 1-hexadecanoyl-sn-glycero-3-phosphate + choline + H(+). It carries out the reaction 1-hexanoyl-sn-glycero-3-phosphocholine + H2O = 1-hexanoyl-sn-glycero-3-phosphate + choline + H(+). It catalyses the reaction 1-(9Z,12Z)-octadecadienoyl-sn-glycero-3-phosphocholine + H2O = 1-(9Z,12Z)-octadecadienoyl-sn-glycero-3-phosphate + choline + H(+). The catalysed reaction is sphing-4-enine-phosphocholine + H2O = sphing-4-enine 1-phosphate + choline + H(+). The enzyme catalyses 1-(5Z,8Z,11Z,14Z-eicosatetraenoyl)-sn-glycero-3-phosphocholine + H2O = 1-(5Z,8Z,11Z,14Z-eicosatetraenoyl)-sn-glycero-3-phosphate + choline + H(+). It carries out the reaction a 2-acyl-sn-glycero-3-phosphocholine + H2O = a 2-acyl-sn-glycerol 3-phosphate + choline + H(+). It catalyses the reaction a 1,2-diacyl-sn-glycero-3-phosphocholine + H2O = a 1,2-diacyl-sn-glycero-3-phosphate + choline + H(+). The catalysed reaction is 1,2-dioctanoyl-sn-glycero-3-phosphocholine + H2O = 1,2-dioctanoyl-sn-glycero-3-phosphate + choline + H(+). The enzyme catalyses 1,2-didecanoyl-sn-glycero-3-phosphocholine + H2O = 1,2-didecanoyl-sn-glycero-3-phosphate + choline + H(+). It carries out the reaction a 1-acyl-sn-glycero-3-phospho-L-serine + H2O = a 1-acyl-sn-glycero-3-phosphate + L-serine + H(+). It catalyses the reaction 1-(9Z-octadecenoyl)-sn-glycero-3-phospho-L-serine + H2O = 1-(9Z-octadecenoyl)-sn-glycero-3-phosphate + L-serine + H(+). The catalysed reaction is a 2-acyl-sn-glycero-3-phospho-L-serine + H2O = a 2-acyl-sn-glycerol 3-phosphate + L-serine + H(+). Its activity is regulated as follows. Inhibited by EDTA and EGTA. In terms of biological role, secreted lysophospholipase D that hydrolyzes lysophospholipids to produce the signaling molecule lysophosphatidic acid (LPA) in extracellular fluids. Its major substrate is lysophosphatidylcholine. Can also act on sphingosylphosphorylcholine producing sphingosine-1-phosphate, a modulator of cell motility. Can hydrolyze, in vitro, bis-pNPP, to some extent pNP-TMP, and barely ATP. Involved in several motility-related processes such as angiogenesis and neurite outgrowth. Acts as an angiogenic factor by stimulating migration of smooth muscle cells and microtubule formation. Stimulates migration of melanoma cells, probably via a pertussis toxin-sensitive G protein. May have a role in induction of parturition. Possible involvement in cell proliferation and adipose tissue development. Required for LPA production in activated platelets, cleaves the sn-1 lysophospholipids to generate sn-1 lysophosphatidic acids containing predominantly 18:2 and 20:4 fatty acids. Shows a preference for the sn-1 to the sn-2 isomer of 1-O-alkyl-sn-glycero-3-phosphocholine (lyso-PAF). The sequence is that of Autotaxin from Mus musculus (Mouse).